We begin with the raw amino-acid sequence, 2017 residues long: Protein cbp-1 (2017 aa).

Basic and acidic residues predominate over residues 1 to 13; sequence MDEPPSKKSRADS. The interval 1-182 is disordered; sequence MDEPPSKKSR…PGMFQGDQQQ (182 aa). Composition is skewed to low complexity over residues 21 to 30 and 78 to 90; these read ALSALESLEA and QPGQSQPQQPPQN. Residues 106–116 show a composition bias toward polar residues; it reads NPSQTSNNSPR. Over residues 141–151 the composition is skewed to low complexity; the sequence is MMSPPSMGRVP. Pro residues predominate over residues 152 to 164; sequence GPSPGGPQPPGPG. Over residues 165 to 182 the composition is skewed to low complexity; it reads QPQMRPGQPGMFQGDQQQ. Symmetric dimethylarginine; by PRMT5; in vitro is present on Arg-234. The tract at residues 307–398 is disordered; it reads SNGQPIRGPN…PGSSMLATHQ (92 aa). Residues 340 to 379 are compositionally biased toward low complexity; that stretch reads QAAAAQHAAQQQAAAQAQAQAAAQQQQQQQREQEAAAAAQ. The TAZ-type 1 zinc finger occupies 399-505; it reads DPEKRKLIQQ…REDCPVCKPL (107 aa). Disordered stretches follow at residues 558–593 and 706–864; these read EGFNGNPFQNGPNRGGPRPPGGNGEIPNLPPPDMPD and GRSD…DTVF. The span at 559–573 shows a compositional bias: low complexity; it reads GFNGNPFQNGPNRGG. The region spanning 593–672 is the KIX domain; it reads DCTKEWHHQV…KIYKIQKELQ (80 aa). Polar residues predominate over residues 721-773; sequence PSQQNQPWGGAPNSNMHQQIPPNGQVPQVNNSSTFPSSGNSTPNIGASSTVSA. Positions 834–854 are enriched in basic and acidic residues; the sequence is KDTKDGVAESKPKEQQAKREP. The 107-residue stretch at 864–970 folds into the Bromo domain; that stretch reads FSQEDLIKFL…EMFVSEMDPV (107 aa). Interaction with histone stretches follow at residues 902-948 and 1224-1226; these read DYHE…YNRK and YLD. A CBP/p300-type HAT domain is found at 1112 to 1492; that stretch reads KYLASKLPHN…LAYSLHETDS (381 aa). Residues 1225–1227, 1237–1238, Ile-1284, Arg-1289, and Trp-1293 contribute to the acetyl-CoA site; these read LDS and RT. A compositionally biased stretch (basic and acidic residues) spans 1349 to 1358; sequence NEEAQRKVKE. Residues 1349–1401 are disordered; sequence NEEAQRKVKEDDDDGEDADGGLGGGDSGKKKSSKNKKNNLKKNAKMNKKKAGS. Residues 1378–1399 show a composition bias toward basic residues; it reads KKSSKNKKNNLKKNAKMNKKKA. A ZZ-type zinc finger spans residues 1494-1540; sequence GMEYTCNKCSSPAVWHCQSCDDFDLCDGCKPTTQHPHEMEKIKSLIG. Zn(2+) is bound by residues Cys-1499, Cys-1502, Cys-1510, Cys-1513, Cys-1519, Cys-1522, His-1528, and His-1530. The TAZ-type 2 zinc-finger motif lies at 1550 to 1631; the sequence is GGTRYESIQR…ACTVPFCMNI (82 aa). Disordered regions lie at residues 1656–1828 and 1908–2017; these read GLQS…QPVR and SQMS…AGGQ. Residues 1667–1678 show a composition bias toward polar residues; sequence TPSTVSNGTPSN. The span at 1699 to 1708 shows a compositional bias: low complexity; that stretch reads QVQMQQHQGS. The span at 1748 to 1757 shows a compositional bias: polar residues; sequence PQMNANQSRY. Low complexity-rich tracts occupy residues 1793–1812 and 1908–1932; these read MNPQQQPQQQQGHPGLQNPG and SQMSMGSSNLQNLQQQQLQQQQAGA. Over residues 1943–1962 the composition is skewed to polar residues; the sequence is QNNSQPRAPSGQFASMNPSM. Residues 1963–2017 are compositionally biased toward low complexity; the sequence is QQQYPQQQQGWPQQRQQNPGGMQQNANPYNQFQNRQNMMMMPQQQQPHPSNAGGQ.

Interacts (via N-terminus domain and HAT domain) with prmt-5; the interaction results in methylation of cbp-1. Interacts (via HAT domain) with cep-1; cep-1 transcriptional activity may be inhibited by interaction with methylated cbp-1. Component of a complex that contains prmt-5 and cbp-1. Methylation by prmt-5 may repress the capacity of cbp-1 to enhance cep-1-dependent transcription of egl-1.

Its subcellular location is the nucleus. The catalysed reaction is L-lysyl-[protein] + acetyl-CoA = N(6)-acetyl-L-lysyl-[protein] + CoA + H(+). In terms of biological role, acetyltransferase enzyme. Acetylates histones, giving a specific tag for transcriptional activation. May prevent DNA damage-induced apoptosis by inhibiting cep-1-dependent transcription activation of the programmed cell death activator egl-1. In differentiated cells, negatively regulates localization of heterochromatin to the nuclear periphery. Plays a role in migration of gonadal distal tip cells, where it probably modulates expression of genes involved in integrin-mediated adhesion. This is Protein cbp-1 (cbp-1) from Caenorhabditis elegans.